Reading from the N-terminus, the 146-residue chain is Large ribosomal subunit protein uL15 (146 aa).

The interval Met1 to Pro65 is disordered. Gly residues predominate over residues Arg24–Ala34.

This sequence belongs to the universal ribosomal protein uL15 family. As to quaternary structure, part of the 50S ribosomal subunit.

Functionally, binds to the 23S rRNA. The polypeptide is Large ribosomal subunit protein uL15 (Bordetella avium (strain 197N)).